We begin with the raw amino-acid sequence, 255 residues long: 3-dehydroquinate dehydratase (255 aa).

Residues 46–48 and Arg82 each bind 3-dehydroquinate; that span reads EWR. His143 serves as the catalytic Proton donor/acceptor. The Schiff-base intermediate with substrate role is filled by Lys170. Residues Arg213, Ser232, and Gln236 each coordinate 3-dehydroquinate.

It belongs to the type-I 3-dehydroquinase family. In terms of assembly, homodimer.

The enzyme catalyses 3-dehydroquinate = 3-dehydroshikimate + H2O. It functions in the pathway metabolic intermediate biosynthesis; chorismate biosynthesis; chorismate from D-erythrose 4-phosphate and phosphoenolpyruvate: step 3/7. Its function is as follows. Involved in the third step of the chorismate pathway, which leads to the biosynthesis of aromatic amino acids. Catalyzes the cis-dehydration of 3-dehydroquinate (DHQ) and introduces the first double bond of the aromatic ring to yield 3-dehydroshikimate. The protein is 3-dehydroquinate dehydratase of Bacillus subtilis (strain 168).